The following is a 71-amino-acid chain: Small ribosomal subunit protein bS21 (71 aa).

This sequence belongs to the bacterial ribosomal protein bS21 family.

The chain is Small ribosomal subunit protein bS21 from Shewanella sediminis (strain HAW-EB3).